The following is a 551-amino-acid chain: Solute carrier family 22 member 27 (551 aa).

The Cytoplasmic segment spans residues 1–15 (MSFQELLNQVGSLGR). Residues 16–36 (FQILQIVFLLLLNAIVVPHIA) traverse the membrane as a helical segment. The Extracellular segment spans residues 37–145 (MENFTAAIPN…DLVCESQALN (109 aa)). Residues Asn39, Asn56, Asn62, Asn102, and Asn107 are each glycosylated (N-linked (GlcNAc...) asparagine). A helical transmembrane segment spans residues 146–166 (SVTKFSFMIGLFIGGIICGHL). Over 167–173 (SDRLGRK) the chain is Cytoplasmic. A helical membrane pass occupies residues 174–194 (FILTCALLQFAITETCVAFAP). The Extracellular portion of the chain corresponds to 195-203 (SFFIYCSLR). Residues 204–224 (FLAGLSVEPILVNSHLLMLEW) form a helical membrane-spanning segment. At 225–234 (TSPKFLTMMA) the chain is on the cytoplasmic side. A helical membrane pass occupies residues 235-255 (ALLSCAPNIGYMISAGLAFLF). Over 256 to 258 (RIW) the chain is Extracellular. Residues 259–279 (HHLQLTMSVPIFFFLILTRWL) form a helical membrane-spanning segment. Residues 280 to 348 (SESARWLIVT…LFHTSILRKR (69 aa)) lie on the Cytoplasmic side of the membrane. The helical transmembrane segment at 349–369 (ICVLSFMRLFFTVSIFGLAVH) threads the bilayer. Topologically, residues 370–376 (LQHLSSN) are extracellular. A helical membrane pass occupies residues 377 to 397 (IILLQFLISALAILVSVIGPF). The Cytoplasmic portion of the chain corresponds to 398-405 (VLNHIGRR). A helical transmembrane segment spans residues 406 to 426 (ITYLVLMSLRGIFILIAVFVP). Residues 427–432 (QEMQTL) lie on the Extracellular side of the membrane. The helical transmembrane segment at 433–453 (RIIMATLAEGISSLCVGVSRL) threads the bilayer. The Cytoplasmic portion of the chain corresponds to 454–467 (HTNELLPTTLRATA). A helical transmembrane segment spans residues 468-488 (VGVIGFFGNSGSFLSPLFMLL). The Extracellular portion of the chain corresponds to 489-494 (ATYYAN). Residues 495-515 (MPWIFYGGFSIFNAFTVFLLP) traverse the membrane as a helical segment. The Cytoplasmic segment spans residues 516-551 (ETKNQPLPDSTHDVGNDWKESRKGKKEDPIIKVTRF). The interval 523–551 (PDSTHDVGNDWKESRKGKKEDPIIKVTRF) is disordered. Positions 525-545 (STHDVGNDWKESRKGKKEDPI) are enriched in basic and acidic residues.

Belongs to the major facilitator (TC 2.A.1) superfamily. Organic cation transporter (TC 2.A.1.19) family. In terms of tissue distribution, expressed in proximal kidney tubules, and in liver hepatocytes (at protein level).

The protein resides in the cell membrane. Does not appear to have transporter activity. In terms of biological role, sodium-independent organic anion transporter which exhibits high specificity for L-carnitine. Can also transport salicylic acid and the drug cimetidine. This Mus musculus (Mouse) protein is Solute carrier family 22 member 27.